We begin with the raw amino-acid sequence, 478 residues long: Islet cell autoantigen 1 (478 aa).

Residues 50 to 253 (ASDADLDAKL…TSHTMAAIHE (204 aa)) form the AH domain. Over residues 306–317 (EHKDSSAYKTEE) the composition is skewed to basic and acidic residues. Disordered regions lie at residues 306 to 365 (EHKD…SGDK) and 398 to 422 (LKEP…GFLP).

As to expression, predominantly expressed in brain, pancreas and stomach mucosa. High expression also found in stomach muscle and testis.

It localises to the cytoplasm. The protein localises to the cytosol. Its subcellular location is the golgi apparatus membrane. The protein resides in the cytoplasmic vesicle. It is found in the secretory vesicle membrane. It localises to the secretory vesicle. The protein localises to the synaptic vesicle membrane. In terms of biological role, may play a role in neurotransmitter secretion. This is Islet cell autoantigen 1 from Mus musculus (Mouse).